Reading from the N-terminus, the 299-residue chain is Rhodanese-like/PpiC domain-containing protein 12, chloroplastic (299 aa).

The transit peptide at 1–81 (MFRVTGTLSA…SGFPALKMRA (81 aa)) directs the protein to the chloroplast. Ser82 is subject to N-acetylserine. One can recognise a PpiC domain in the interval 93 to 183 (SREILVQHLL…FGLHLLQVLS (91 aa)). The region spanning 205-297 (FMDEAQLIDV…YSLKVDPSIP (93 aa)) is the Rhodanese domain. The Cysteine persulfide intermediate role is filled by Cys257.

The protein localises to the plastid. It localises to the chloroplast. The sequence is that of Rhodanese-like/PpiC domain-containing protein 12, chloroplastic from Arabidopsis thaliana (Mouse-ear cress).